The sequence spans 182 residues: Interferon gamma 1 (182 aa).

Residues 1 to 21 (MIAQNMTIFFWGVCLLTSGWA) form the signal peptide. The N-linked (GlcNAc...) asparagine glycan is linked to Asn-93.

The protein belongs to the type II (or gamma) interferon family. Homodimer. Highly expressed in spleen. Also detected at lower levels in brain, gill, kidney, heart, intestine and muscle. In immune cell populations, has highest expression in peripheral blood leukocytes and splenocytes. Detected in kidney-derived monocytes, neutrophils, macrophages and leukocytes.

It is found in the secreted. Cytokine which binds to interferon gamma receptor 1-like (ifngr1l). Has activating effects on primary macrophages and neutrophils. Induces nitric oxide production and phagocytic responses in macrophages. Primes macrophages and neutrophils for production of reactive oxygen intermediates (ROI). Stimulates phosphorylation and nuclear localization of the JAK/STAT signal transducer stat1. Promotes increased expression of a number of genes important for macrophage activity, including the interferon regulatory factors irf1, irf2, irf8 and irf9. The chain is Interferon gamma 1 from Carassius auratus (Goldfish).